The chain runs to 165 residues: 16S rRNA aminocarboxypropyltransferase (165 aa).

S-adenosyl-L-methionine-binding residues include Thr-17, Leu-62, Leu-83, and Thr-102.

The protein belongs to the TDD superfamily. TSR3 family.

The protein resides in the cytoplasm. The catalysed reaction is an N(1)-methylpseudouridine in rRNA + S-adenosyl-L-methionine = N(1)-methyl-N(3)-[(3S)-3-amino-3-carboxypropyl]pseudouridine in rRNA + S-methyl-5'-thioadenosine + H(+). In terms of biological role, aminocarboxypropyltransferase that catalyzes the aminocarboxypropyl transfer on pseudouridine corresponding to position 914 in M.jannaschii 16S rRNA. It constitutes the last step in biosynthesis of the hypermodified N1-methyl-N3-(3-amino-3-carboxypropyl) pseudouridine (m1acp3-Psi). The polypeptide is 16S rRNA aminocarboxypropyltransferase (Halobacterium salinarum (strain ATCC 700922 / JCM 11081 / NRC-1) (Halobacterium halobium)).